The sequence spans 87 residues: Large ribosomal subunit protein bL31B (87 aa).

It belongs to the bacterial ribosomal protein bL31 family. Type B subfamily. Part of the 50S ribosomal subunit.

This is Large ribosomal subunit protein bL31B from Paraburkholderia phymatum (strain DSM 17167 / CIP 108236 / LMG 21445 / STM815) (Burkholderia phymatum).